We begin with the raw amino-acid sequence, 343 residues long: Protein RecA (343 aa).

An ATP-binding site is contributed by 66 to 73 (GPESSGKT).

This sequence belongs to the RecA family.

The protein localises to the cytoplasm. In terms of biological role, can catalyze the hydrolysis of ATP in the presence of single-stranded DNA, the ATP-dependent uptake of single-stranded DNA by duplex DNA, and the ATP-dependent hybridization of homologous single-stranded DNAs. It interacts with LexA causing its activation and leading to its autocatalytic cleavage. The protein is Protein RecA of Rickettsia canadensis (strain McKiel).